The sequence spans 160 residues: MNLKILGIDPGSRNCGYAIIEANKGKNILIEAGLIKIKPSTLQYQITELCEGLDLIFKNHSFDEVAIEDIFFAYNPKTVLKLAQFRGALSLKILQIHGDFAEYTPLQVKKAVTGKAKATKEQVAFMVKRLLGLSKDIKPLDITDAIAVALTHAANLRVRV.

Residues aspartate 9, glutamate 68, and aspartate 141 contribute to the active site. Residues aspartate 9, glutamate 68, and aspartate 141 each coordinate Mg(2+).

This sequence belongs to the RuvC family. Homodimer which binds Holliday junction (HJ) DNA. The HJ becomes 2-fold symmetrical on binding to RuvC with unstacked arms; it has a different conformation from HJ DNA in complex with RuvA. In the full resolvosome a probable DNA-RuvA(4)-RuvB(12)-RuvC(2) complex forms which resolves the HJ. Mg(2+) is required as a cofactor.

It localises to the cytoplasm. It catalyses the reaction Endonucleolytic cleavage at a junction such as a reciprocal single-stranded crossover between two homologous DNA duplexes (Holliday junction).. Functionally, the RuvA-RuvB-RuvC complex processes Holliday junction (HJ) DNA during genetic recombination and DNA repair. Endonuclease that resolves HJ intermediates. Cleaves cruciform DNA by making single-stranded nicks across the HJ at symmetrical positions within the homologous arms, yielding a 5'-phosphate and a 3'-hydroxyl group; requires a central core of homology in the junction. The consensus cleavage sequence is 5'-(A/T)TT(C/G)-3'. Cleavage occurs on the 3'-side of the TT dinucleotide at the point of strand exchange. HJ branch migration catalyzed by RuvA-RuvB allows RuvC to scan DNA until it finds its consensus sequence, where it cleaves and resolves the cruciform DNA. The chain is Crossover junction endodeoxyribonuclease RuvC from Campylobacter jejuni (strain RM1221).